A 456-amino-acid polypeptide reads, in one-letter code: Probable transcription factor At3g04930 (456 aa).

A disordered region spans residues 1-71 (MTSDHRDALF…LNSPSTSSLP (71 aa)). 2 stretches are compositionally biased toward acidic residues: residues 15–38 (ESPD…DLRD) and 50–62 (AEAE…EEDL). Ser16 carries the post-translational modification Phosphoserine.

It belongs to the GeBP family.

The protein is Probable transcription factor At3g04930 of Arabidopsis thaliana (Mouse-ear cress).